The primary structure comprises 123 residues: Protein Wnt-7a (123 aa).

Residue serine 1 is the site of O-palmitoleoyl serine; by PORCN attachment. The tract at residues 33–61 is disordered linker; it reads VEPVRASRNKRPTFLKIKKPLSYLKPMDT. A disulfide bridge connects residues cysteine 89 and cysteine 104. Asparagine 90 carries N-linked (GlcNAc...) asparagine glycosylation.

It belongs to the Wnt family. Palmitoleoylation is required for efficient binding to frizzled receptors. Depalmitoleoylation leads to Wnt signaling pathway inhibition.

The protein resides in the secreted. It localises to the extracellular space. It is found in the extracellular matrix. Ligand for members of the frizzled family of seven transmembrane receptors that functions in the canonical Wnt/beta-catenin signaling pathway. Plays an important role in embryonic development, including dorsal versus ventral patterning during limb development, skeleton development and urogenital tract development. Required for central nervous system (CNS) angiogenesis and blood-brain barrier regulation. The chain is Protein Wnt-7a (WNT-7A) from Plethodon jordani (Red-cheeked salamander).